A 413-amino-acid polypeptide reads, in one-letter code: Serine--tRNA ligase (413 aa).

221–223 contributes to the L-serine binding site; that stretch reads TAE. Position 252 to 254 (252 to 254) interacts with ATP; the sequence is RRE. Residue Glu-275 participates in L-serine binding. 339 to 342 is an ATP binding site; it reads EVSS. Ser-375 contacts L-serine.

This sequence belongs to the class-II aminoacyl-tRNA synthetase family. Type-1 seryl-tRNA synthetase subfamily. Homodimer. The tRNA molecule binds across the dimer.

It is found in the cytoplasm. The enzyme catalyses tRNA(Ser) + L-serine + ATP = L-seryl-tRNA(Ser) + AMP + diphosphate + H(+). It catalyses the reaction tRNA(Sec) + L-serine + ATP = L-seryl-tRNA(Sec) + AMP + diphosphate + H(+). Its pathway is aminoacyl-tRNA biosynthesis; selenocysteinyl-tRNA(Sec) biosynthesis; L-seryl-tRNA(Sec) from L-serine and tRNA(Sec): step 1/1. Its function is as follows. Catalyzes the attachment of serine to tRNA(Ser). Is also able to aminoacylate tRNA(Sec) with serine, to form the misacylated tRNA L-seryl-tRNA(Sec), which will be further converted into selenocysteinyl-tRNA(Sec). The protein is Serine--tRNA ligase of Dehalococcoides mccartyi (strain ATCC BAA-2266 / KCTC 15142 / 195) (Dehalococcoides ethenogenes (strain 195)).